Here is a 447-residue protein sequence, read N- to C-terminus: Methylenetetrahydrofolate--tRNA-(uracil-5-)-methyltransferase TrmFO (447 aa).

Residue 13 to 18 (GAGLAG) coordinates FAD.

This sequence belongs to the MnmG family. TrmFO subfamily. It depends on FAD as a cofactor.

The protein resides in the cytoplasm. The catalysed reaction is uridine(54) in tRNA + (6R)-5,10-methylene-5,6,7,8-tetrahydrofolate + NADH + H(+) = 5-methyluridine(54) in tRNA + (6S)-5,6,7,8-tetrahydrofolate + NAD(+). It carries out the reaction uridine(54) in tRNA + (6R)-5,10-methylene-5,6,7,8-tetrahydrofolate + NADPH + H(+) = 5-methyluridine(54) in tRNA + (6S)-5,6,7,8-tetrahydrofolate + NADP(+). Functionally, catalyzes the folate-dependent formation of 5-methyl-uridine at position 54 (M-5-U54) in all tRNAs. In Streptococcus thermophilus (strain CNRZ 1066), this protein is Methylenetetrahydrofolate--tRNA-(uracil-5-)-methyltransferase TrmFO.